We begin with the raw amino-acid sequence, 702 residues long: Ferrioxamine B receptor (702 aa).

Residues 1 to 30 (MPLEMFMFATTRMALLIGGAIGGATFPLFA) form the signal peptide. Residues 55–168 (PDIETPQSVS…PGGIVALTSR (114 aa)) form the TBDR plug domain. Positions 173 to 702 (DAGGEVKLFA…SIVGSVSWAF (530 aa)) constitute a TBDR beta-barrel domain.

This sequence belongs to the TonB-dependent receptor family.

The protein localises to the cell outer membrane. Ferrioxamine binding and uptake, in association with the TonB protein. The polypeptide is Ferrioxamine B receptor (foxA) (Salmonella typhimurium (strain LT2 / SGSC1412 / ATCC 700720)).